A 702-amino-acid polypeptide reads, in one-letter code: Polyphosphate kinase (702 aa).

Asn-55 lines the ATP pocket. Mg(2+) is bound by residues Arg-389 and Arg-419. Residue His-449 is the Phosphohistidine intermediate of the active site. ATP-binding residues include Tyr-482, Arg-578, and His-606.

This sequence belongs to the polyphosphate kinase 1 (PPK1) family. It depends on Mg(2+) as a cofactor. An intermediate of this reaction is the autophosphorylated ppk in which a phosphate is covalently linked to a histidine residue through a N-P bond.

It carries out the reaction [phosphate](n) + ATP = [phosphate](n+1) + ADP. Functionally, catalyzes the reversible transfer of the terminal phosphate of ATP to form a long-chain polyphosphate (polyP). This Bacillus anthracis protein is Polyphosphate kinase.